Here is a 463-residue protein sequence, read N- to C-terminus: Asparagine--tRNA ligase (463 aa).

The protein belongs to the class-II aminoacyl-tRNA synthetase family. As to quaternary structure, homodimer.

It is found in the cytoplasm. The enzyme catalyses tRNA(Asn) + L-asparagine + ATP = L-asparaginyl-tRNA(Asn) + AMP + diphosphate + H(+). The polypeptide is Asparagine--tRNA ligase (Bacillus cytotoxicus (strain DSM 22905 / CIP 110041 / 391-98 / NVH 391-98)).